Here is a 308-residue protein sequence, read N- to C-terminus: Ribosomal RNA small subunit methyltransferase H (308 aa).

Residues 34–36 (GGH), Asp-54, Phe-85, Asp-99, and Gln-106 contribute to the S-adenosyl-L-methionine site.

It belongs to the methyltransferase superfamily. RsmH family.

Its subcellular location is the cytoplasm. The enzyme catalyses cytidine(1402) in 16S rRNA + S-adenosyl-L-methionine = N(4)-methylcytidine(1402) in 16S rRNA + S-adenosyl-L-homocysteine + H(+). In terms of biological role, specifically methylates the N4 position of cytidine in position 1402 (C1402) of 16S rRNA. The chain is Ribosomal RNA small subunit methyltransferase H from Dichelobacter nodosus (strain VCS1703A).